The primary structure comprises 160 residues: Putative pre-16S rRNA nuclease (160 aa).

This sequence belongs to the YqgF nuclease family.

Its subcellular location is the cytoplasm. In terms of biological role, could be a nuclease involved in processing of the 5'-end of pre-16S rRNA. The sequence is that of Putative pre-16S rRNA nuclease from Cereibacter sphaeroides (strain ATCC 17025 / ATH 2.4.3) (Rhodobacter sphaeroides).